Here is a 310-residue protein sequence, read N- to C-terminus: Methionyl-tRNA formyltransferase (310 aa).

Residue 106–109 (SLLP) participates in (6S)-5,6,7,8-tetrahydrofolate binding.

The protein belongs to the Fmt family.

It catalyses the reaction L-methionyl-tRNA(fMet) + (6R)-10-formyltetrahydrofolate = N-formyl-L-methionyl-tRNA(fMet) + (6S)-5,6,7,8-tetrahydrofolate + H(+). Attaches a formyl group to the free amino group of methionyl-tRNA(fMet). The formyl group appears to play a dual role in the initiator identity of N-formylmethionyl-tRNA by promoting its recognition by IF2 and preventing the misappropriation of this tRNA by the elongation apparatus. In Fervidobacterium nodosum (strain ATCC 35602 / DSM 5306 / Rt17-B1), this protein is Methionyl-tRNA formyltransferase.